The sequence spans 217 residues: Flagellar L-ring protein 2 (217 aa).

A signal peptide spans 1-15; the sequence is MRILLALTWLAWLGA. Cys16 carries N-palmitoyl cysteine lipidation. Cys16 carries the S-diacylglycerol cysteine lipid modification.

Belongs to the FlgH family. As to quaternary structure, the basal body constitutes a major portion of the flagellar organelle and consists of four rings (L,P,S, and M) mounted on a central rod.

Its subcellular location is the cell outer membrane. The protein resides in the bacterial flagellum basal body. Assembles around the rod to form the L-ring and probably protects the motor/basal body from shearing forces during rotation. The polypeptide is Flagellar L-ring protein 2 (Burkholderia thailandensis (strain ATCC 700388 / DSM 13276 / CCUG 48851 / CIP 106301 / E264)).